The primary structure comprises 20 residues: Mite allergen Der p 6 (20 aa).

In terms of domain architecture, Peptidase S1 spans 1–20; sequence AIGXQPAAEAEAPFQISLMK.

Belongs to the peptidase S1 family.

It localises to the secreted. In terms of biological role, protease that shows specificity similar to chymotrypsin. The sequence is that of Mite allergen Der p 6 (DERP6) from Dermatophagoides pteronyssinus (European house dust mite).